A 308-amino-acid chain; its full sequence is ADP-L-glycero-D-manno-heptose-6-epimerase (308 aa).

NADP(+)-binding positions include 10 to 11 (MI), 31 to 32 (DN), Lys-38, Lys-53, 75 to 79 (EGACS), and Asn-92. Residue Tyr-139 is the Proton acceptor of the active site. An NADP(+)-binding site is contributed by Lys-143. Asn-168 is a substrate binding site. NADP(+)-binding residues include Val-169 and Lys-177. The active-site Proton acceptor is Lys-177. Substrate-binding positions include Ser-179, His-186, 200–203 (FAGS), Arg-208, and Tyr-271.

It belongs to the NAD(P)-dependent epimerase/dehydratase family. HldD subfamily. In terms of assembly, homopentamer. NADP(+) is required as a cofactor.

It carries out the reaction ADP-D-glycero-beta-D-manno-heptose = ADP-L-glycero-beta-D-manno-heptose. The protein operates within nucleotide-sugar biosynthesis; ADP-L-glycero-beta-D-manno-heptose biosynthesis; ADP-L-glycero-beta-D-manno-heptose from D-glycero-beta-D-manno-heptose 7-phosphate: step 4/4. Its function is as follows. Catalyzes the interconversion between ADP-D-glycero-beta-D-manno-heptose and ADP-L-glycero-beta-D-manno-heptose via an epimerization at carbon 6 of the heptose. This is ADP-L-glycero-D-manno-heptose-6-epimerase from Mannheimia succiniciproducens (strain KCTC 0769BP / MBEL55E).